We begin with the raw amino-acid sequence, 443 residues long: Carboxypeptidase M (443 aa).

The signal sequence occupies residues 1–17 (MDFPCLWLGLLLPLVAA). The Peptidase M14 domain maps to 21 to 311 (NYHRQEGMEA…ASLIEYIKQV (291 aa)). Residue N38 is glycosylated (N-linked (GlcNAc...) asparagine). The Zn(2+) site is built by H83 and E86. N-linked (GlcNAc...) asparagine glycans are attached at residues N115 and N164. Disulfide bonds link C138/C285, C242/C284, and C341/C410. H190 contacts Zn(2+). The Proton donor/acceptor role is filled by E281. Residues N363 and N384 are each glycosylated (N-linked (GlcNAc...) asparagine). A lipid anchor (GPI-anchor amidated serine) is attached at S423. A propeptide spans 424–443 (AATKPSLFLFLVSLLHIFFK) (removed in mature form).

Belongs to the peptidase M14 family. Requires Zn(2+) as cofactor.

It localises to the cell membrane. The enzyme catalyses Cleavage of C-terminal arginine or lysine residues from polypeptides.. Its activity is regulated as follows. Inhibited by O-phenanthroline and MGTA and activated by cobalt. Its function is as follows. Specifically removes C-terminal basic residues (Arg or Lys) from peptides and proteins. It is believed to play important roles in the control of peptide hormone and growth factor activity at the cell surface, and in the membrane-localized degradation of extracellular proteins. This chain is Carboxypeptidase M (CPM), found in Homo sapiens (Human).